The chain runs to 283 residues: Formamidopyrimidine-DNA glycosylase (283 aa).

P2 functions as the Schiff-base intermediate with DNA in the catalytic mechanism. E3 functions as the Proton donor in the catalytic mechanism. K58 acts as the Proton donor; for beta-elimination activity in catalysis. DNA-binding residues include H100, R119, and K162. Residues 247–283 form an FPG-type zinc finger; the sequence is RVYGREGQRCQTPDCAEKILRKVQSGRSSFYCPACQR. The Proton donor; for delta-elimination activity role is filled by R273.

It belongs to the FPG family. Monomer. The cofactor is Zn(2+).

It catalyses the reaction Hydrolysis of DNA containing ring-opened 7-methylguanine residues, releasing 2,6-diamino-4-hydroxy-5-(N-methyl)formamidopyrimidine.. The enzyme catalyses 2'-deoxyribonucleotide-(2'-deoxyribose 5'-phosphate)-2'-deoxyribonucleotide-DNA = a 3'-end 2'-deoxyribonucleotide-(2,3-dehydro-2,3-deoxyribose 5'-phosphate)-DNA + a 5'-end 5'-phospho-2'-deoxyribonucleoside-DNA + H(+). Its function is as follows. Involved in base excision repair of DNA damaged by oxidation or by mutagenic agents. Acts as a DNA glycosylase that recognizes and removes damaged bases. Has a preference for oxidized purines, such as 7,8-dihydro-8-oxoguanine (8-oxoG). Has AP (apurinic/apyrimidinic) lyase activity and introduces nicks in the DNA strand. Cleaves the DNA backbone by beta-delta elimination to generate a single-strand break at the site of the removed base with both 3'- and 5'-phosphates. The polypeptide is Formamidopyrimidine-DNA glycosylase (Jannaschia sp. (strain CCS1)).